Here is a 652-residue protein sequence, read N- to C-terminus: DNA ligase (652 aa).

NAD(+)-binding positions include 29–33 (DSDYD), 78–79 (SL), and Glu107. The active-site N6-AMP-lysine intermediate is the Lys109. Positions 130, 164, 278, and 302 each coordinate NAD(+). Zn(2+)-binding residues include Cys395, Cys398, Cys413, and Cys418. Residues 577 to 652 (NSDAALFGLT…IEDEDWLRQL (76 aa)) form the BRCT domain.

It belongs to the NAD-dependent DNA ligase family. LigA subfamily. Mg(2+) is required as a cofactor. Requires Mn(2+) as cofactor.

The catalysed reaction is NAD(+) + (deoxyribonucleotide)n-3'-hydroxyl + 5'-phospho-(deoxyribonucleotide)m = (deoxyribonucleotide)n+m + AMP + beta-nicotinamide D-nucleotide.. Its function is as follows. DNA ligase that catalyzes the formation of phosphodiester linkages between 5'-phosphoryl and 3'-hydroxyl groups in double-stranded DNA using NAD as a coenzyme and as the energy source for the reaction. It is essential for DNA replication and repair of damaged DNA. This Streptococcus pyogenes serotype M4 (strain MGAS10750) protein is DNA ligase.